The sequence spans 162 residues: Protein cornichon homolog 2 (162 aa).

Residues 1 to 10 (MAFTFAAFCY) lie on the Cytoplasmic side of the membrane. A helical transmembrane segment spans residues 11–31 (MLTLVLCASLIFFIIWHIIAF). Over 32 to 72 (DELRTDFKNPIEQGNPSRARERVKNVERICCLLRKLVVPEY) the chain is Lumenal. Residues 73–93 (CIHGLFCLMFMCAAEWVTLGL) form a helical membrane-spanning segment. Over 94–138 (NIPLLFYHLWRYFHRPADGSEVMFDPVSIMNVDILNYCQKEAWCK) the chain is Cytoplasmic. Residues 139-161 (LAFYLLSFFYYLYRVGATVRYVS) traverse the membrane as a helical segment. Residue Ala162 is a topological domain, lumenal.

The protein belongs to the cornichon family.

It localises to the membrane. Its function is as follows. Regulates the trafficking and gating properties of AMPA-selective glutamate receptors (AMPARs). The protein is Protein cornichon homolog 2 (cnih2) of Xenopus tropicalis (Western clawed frog).